The chain runs to 287 residues: Nucleotide-binding protein MXAN_6564 (287 aa).

G13–S20 is an ATP binding site. D62–E65 serves as a coordination point for GTP.

The protein belongs to the RapZ-like family.

Displays ATPase and GTPase activities. This Myxococcus xanthus (strain DK1622) protein is Nucleotide-binding protein MXAN_6564.